Here is a 333-residue protein sequence, read N- to C-terminus: MALADRLLEAWYRGHPALVLLRPLEALFRCVAQRRRERFLRGEGGIYRAPVPVVVVGNVTVGGTGKTPLILWLIEACRRRGLRVGVVSRGYGARPPRLPWRVTADQSAGQAGDEPLLIVQRTGVPLAIDPDRPRAVRALLKEQPLDLILSDDGLQHYRLARDLELVLLDAVRGLGNGHCLPAGPLREPAERLASVDAVLHNGAAWDPPGGYAFSLLPSALVHMATGERRPLDHFPPGTALHALAGIGNPRRFFATLEALHWRPIPHAFADHARYRAEQLRFSPALPLVMTEKDAVKCRAFAPADCWYLAVDAVPSPAFADWFDAALARLLASS.

60–67 (TVGGTGKT) lines the ATP pocket.

This sequence belongs to the LpxK family.

The enzyme catalyses a lipid A disaccharide + ATP = a lipid IVA + ADP + H(+). It participates in glycolipid biosynthesis; lipid IV(A) biosynthesis; lipid IV(A) from (3R)-3-hydroxytetradecanoyl-[acyl-carrier-protein] and UDP-N-acetyl-alpha-D-glucosamine: step 6/6. Functionally, transfers the gamma-phosphate of ATP to the 4'-position of a tetraacyldisaccharide 1-phosphate intermediate (termed DS-1-P) to form tetraacyldisaccharide 1,4'-bis-phosphate (lipid IVA). The protein is Tetraacyldisaccharide 4'-kinase of Azotobacter vinelandii (strain DJ / ATCC BAA-1303).